The primary structure comprises 178 residues: Protein AUXIN-REGULATED GENE INVOLVED IN ORGAN SIZE (178 aa).

Positions 1–85 (MYLLSPRNGD…GGGGGSNIRE (85 aa)) are disordered. A compositionally biased stretch (acidic residues) spans 10–27 (DEEDEQEEIQELISDDEP). A compositionally biased stretch (low complexity) spans 33-47 (ASCATAASSSSSSGS). An organ Size Related (OSR) domain region spans residues 100 to 151 (FSVESLLLLVCVTASLVILPLVLPPLPPPPSMLMLVPVAMLVLLLALAFMPT). Transmembrane regions (helical) follow at residues 105–125 (LLLL…LPPL) and 131–151 (MLML…FMPT). The interval 153–178 (TSSSSSAGGGGGGGRNGATTGHAPYL) is disordered. Over residues 159-168 (AGGGGGGGRN) the composition is skewed to gly residues. Residues 169–178 (GATTGHAPYL) are compositionally biased toward low complexity.

This sequence belongs to the plant organ size related (OSR) protein family. In terms of tissue distribution, mostly expressed in young tissues such as young roots, young leaves, and seeds. Also present in stems, mature leaves, and spikelets.

Its subcellular location is the membrane. The protein resides in the nucleus. It is found in the cytoplasm. It localises to the endoplasmic reticulum. Its function is as follows. Promotes both cell expansion and proliferation-dependent organ growth. This Oryza sativa subsp. japonica (Rice) protein is Protein AUXIN-REGULATED GENE INVOLVED IN ORGAN SIZE (ARGOS).